Here is a 148-residue protein sequence, read N- to C-terminus: 3-dehydroquinate dehydratase (148 aa).

Tyr24 serves as the catalytic Proton acceptor. Substrate-binding residues include Asn80, His86, and Asp93. His106 acts as the Proton donor in catalysis. Substrate contacts are provided by residues 107–108 and Arg117; that span reads IS.

This sequence belongs to the type-II 3-dehydroquinase family. As to quaternary structure, homododecamer.

It carries out the reaction 3-dehydroquinate = 3-dehydroshikimate + H2O. Its pathway is metabolic intermediate biosynthesis; chorismate biosynthesis; chorismate from D-erythrose 4-phosphate and phosphoenolpyruvate: step 3/7. Functionally, catalyzes a trans-dehydration via an enolate intermediate. In Acidovorax sp. (strain JS42), this protein is 3-dehydroquinate dehydratase.